We begin with the raw amino-acid sequence, 131 residues long: Holo-[acyl-carrier-protein] synthase (131 aa).

Positions 8 and 63 each coordinate Mg(2+).

This sequence belongs to the P-Pant transferase superfamily. AcpS family. Mg(2+) serves as cofactor.

The protein localises to the cytoplasm. The enzyme catalyses apo-[ACP] + CoA = holo-[ACP] + adenosine 3',5'-bisphosphate + H(+). Functionally, transfers the 4'-phosphopantetheine moiety from coenzyme A to a Ser of acyl-carrier-protein. The protein is Holo-[acyl-carrier-protein] synthase of Shewanella piezotolerans (strain WP3 / JCM 13877).